The following is a 546-amino-acid chain: Light-independent protochlorophyllide reductase subunit B (546 aa).

D36 is a [4Fe-4S] cluster binding site. D287 serves as the catalytic Proton donor. Substrate is bound at residue 422–423 (GL). Positions 443–501 (PSHLSAHRPTGEAVGDAVGEPPAAPRDQAAPAATLDGSAAQSDPARTTPPGAPSWEDSA) are disordered.

This sequence belongs to the ChlB/BchB/BchZ family. As to quaternary structure, protochlorophyllide reductase is composed of three subunits; BchL, BchN and BchB. Forms a heterotetramer of two BchB and two BchN subunits. It depends on [4Fe-4S] cluster as a cofactor.

It carries out the reaction chlorophyllide a + oxidized 2[4Fe-4S]-[ferredoxin] + 2 ADP + 2 phosphate = protochlorophyllide a + reduced 2[4Fe-4S]-[ferredoxin] + 2 ATP + 2 H2O. The protein operates within porphyrin-containing compound metabolism; bacteriochlorophyll biosynthesis (light-independent). In terms of biological role, component of the dark-operative protochlorophyllide reductase (DPOR) that uses Mg-ATP and reduced ferredoxin to reduce ring D of protochlorophyllide (Pchlide) to form chlorophyllide a (Chlide). This reaction is light-independent. The NB-protein (BchN-BchB) is the catalytic component of the complex. The sequence is that of Light-independent protochlorophyllide reductase subunit B from Rhodospirillum rubrum (strain ATCC 11170 / ATH 1.1.1 / DSM 467 / LMG 4362 / NCIMB 8255 / S1).